Here is a 445-residue protein sequence, read N- to C-terminus: Type II methyltransferase M.Bpa9945I (445 aa).

The 444-residue stretch at 1–444 (MIVIDLFSGA…RAVKDVINGH (444 aa)) folds into the SAM-dependent MTase C5-type domain. The active site involves C136.

This sequence belongs to the class I-like SAM-binding methyltransferase superfamily. C5-methyltransferase family.

Its subcellular location is the cytoplasm. The catalysed reaction is a 2'-deoxycytidine in DNA + S-adenosyl-L-methionine = a 5-methyl-2'-deoxycytidine in DNA + S-adenosyl-L-homocysteine + H(+). Functionally, component of antiviral defense system DISARM (defense island system associated with restriction-modification), composed of DrmE, DrmA, DrmB, DrmC and DrmMII. DISARM is probably a multi-gene restriction module, this subunit is a DNA methylase. Expression of DISARM in B.subtilis (strain BEST7003) confers resistance to phages Nf, phi29, phi105, phi3T, SPO1, SPR and SPP1. Protection is over 10(7)-fold against phi3T, 10(4)-10(5)-fold against Nf, phi29, phi105 and SPR, 100-fold against SPO1 and 10-fold against SPP1. DISARM does not interfere with phage adsorption, but instead interferes with (phi3T) DNA replication early in its cycle, preventing replication, circularization and lysogeny and probably causes phage DNA degradation (DNA is degraded in SPP1-infected cells). Expression of this methylase alone leads to highly methylated phage, however they are still susceptible to the DISARM system. Its function is as follows. A methylase, recognizes the double-stranded sequence 5'-CCWGG-3', methylates C-2 on both strands. Phage Nf does not have any 5'-CCWGG-3' motifs but is still targeted by the DISARM system. The sequence is that of Type II methyltransferase M.Bpa9945I from Bacillus paralicheniformis (strain ATCC 9945a / NCIMB 11709 / CD-2).